We begin with the raw amino-acid sequence, 347 residues long: UDP-glucose 4-epimerase (347 aa).

Residues 11–13, 32–36, 65–66, phenylalanine 87, and lysine 91 contribute to the NAD(+) site; these read GYI, DNFHN, and DI. 131 to 133 contacts substrate; it reads SAT. The active-site Proton acceptor is tyrosine 156. The NAD(+) site is built by lysine 160 and tyrosine 184. Substrate-binding positions include 184 to 186, 205 to 207, 223 to 225, arginine 238, and 299 to 302; these read YFN, NNL, NVF, and REGD.

It belongs to the NAD(P)-dependent epimerase/dehydratase family. Homodimer. It depends on NAD(+) as a cofactor.

The catalysed reaction is UDP-alpha-D-glucose = UDP-alpha-D-galactose. It carries out the reaction UDP-N-acetyl-alpha-D-glucosamine = UDP-N-acetyl-alpha-D-galactosamine. Its pathway is carbohydrate metabolism; galactose metabolism. Functionally, catalyzes two distinct but analogous reactions: the reversible epimerization of UDP-glucose to UDP-galactose and the reversible epimerization of UDP-N-acetylglucosamine to UDP-N-acetylgalactosamine. The reaction with UDP-Gal plays a critical role in the Leloir pathway of galactose catabolism in which galactose is converted to the glycolytic intermediate glucose 6-phosphate. It contributes to the catabolism of dietary galactose and enables the endogenous biosynthesis of both UDP-Gal and UDP-GalNAc when exogenous sources are limited. Both UDP-sugar interconversions are important in the synthesis of glycoproteins and glycolipids. The sequence is that of UDP-glucose 4-epimerase (Gale) from Mus musculus (Mouse).